Consider the following 326-residue polypeptide: Probable oxidoreductase patJ (326 aa).

The disordered stretch occupies residues 287 to 326; sequence HGVQPGSVNGSNGHSTGVESKLEQLGSRAQRRVVIDDAGK. Residues 292 to 304 are compositionally biased toward polar residues; that stretch reads GSVNGSNGHSTGV.

The protein belongs to the oxidoreductase OpS7 family.

Its subcellular location is the vacuole lumen. It is found in the cytoplasmic vesicle lumen. It participates in mycotoxin biosynthesis; patulin biosynthesis. Functionally, probable oxidoreductase; part of the gene cluster that mediates the biosynthesis of patulin, an acetate-derived tetraketide mycotoxin produced by several fungal species that shows antimicrobial properties against several bacteria. PatJ acts with patO in the vacuole to convert gentisyl alcohol to isoepoxydon. The pathway begins with the synthesis of 6-methylsalicylic acid by the polyketide synthase (PKS) patK via condensation of acetate and malonate units. The 6-methylsalicylic acid decarboxylase patG then catalyzes the decarboxylation of 6-methylsalicylic acid to yield m-cresol (also known as 3-methylphenol). These first reactions occur in the cytosol. The intermediate m-cresol is then transported into the endoplasmic reticulum where the cytochrome P450 monooxygenase patH converts it to m-hydroxybenzyl alcohol, which is further converted to gentisyl alcohol by the cytochrome P450 monooxygenase patI. The oxidoreductases patJ and patO further convert gentisyl alcohol to isoepoxydon in the vacuole. PatN catalyzes then the transformation of isoepoxydon into phyllostine. The cluster protein patF is responsible for the conversion from phyllostine to neopatulin whereas the alcohol dehydrogenase patD converts neopatulin to E-ascladiol. The steps between isoepoxydon and E-ascladiol occur in the cytosol, and E-ascladiol is probably secreted to the extracellular space by one of the cluster-specific transporters patC or patM. Finally, the secreted patulin synthase patE catalyzes the conversion of E-ascladiol to patulin. The chain is Probable oxidoreductase patJ from Penicillium expansum (Blue mold rot fungus).